The sequence spans 152 residues: Small ribosomal subunit protein uS13z/uS13y/uS13x (152 aa).

Serine 2 is modified (N-acetylserine).

This sequence belongs to the universal ribosomal protein uS13 family.

It localises to the cytoplasm. Its function is as follows. Located at the top of the head of the 40S subunit, it contacts several helices of the 18S rRNA. In Arabidopsis thaliana (Mouse-ear cress), this protein is Small ribosomal subunit protein uS13z/uS13y/uS13x (RPS18A).